We begin with the raw amino-acid sequence, 350 residues long: Phosphotriesterase-related protein (350 aa).

A divalent metal cation is bound by residues H22, H24, E169, H201, H230, and D298.

This sequence belongs to the metallo-dependent hydrolases superfamily. Phosphotriesterase family. A divalent metal cation is required as a cofactor.

In Drosophila persimilis (Fruit fly), this protein is Phosphotriesterase-related protein.